The chain runs to 88 residues: UPF0335 protein M446_5200 (88 aa).

The protein belongs to the UPF0335 family.

This chain is UPF0335 protein M446_5200, found in Methylobacterium sp. (strain 4-46).